The sequence spans 285 residues: Biotin synthase (285 aa).

One can recognise a Radical SAM core domain in the interval 2–223 (STRKQIFLCA…RRAHTLLGED (222 aa)). Residues cysteine 20, cysteine 24, and cysteine 27 each contribute to the [4Fe-4S] cluster site. Cysteine 64, cysteine 99, and cysteine 157 together coordinate [2Fe-2S] cluster.

It belongs to the radical SAM superfamily. Biotin synthase family. Homodimer. The cofactor is [4Fe-4S] cluster. [2Fe-2S] cluster is required as a cofactor.

The enzyme catalyses (4R,5S)-dethiobiotin + (sulfur carrier)-SH + 2 reduced [2Fe-2S]-[ferredoxin] + 2 S-adenosyl-L-methionine = (sulfur carrier)-H + biotin + 2 5'-deoxyadenosine + 2 L-methionine + 2 oxidized [2Fe-2S]-[ferredoxin]. Its pathway is cofactor biosynthesis; biotin biosynthesis; biotin from 7,8-diaminononanoate: step 2/2. Catalyzes the conversion of dethiobiotin (DTB) to biotin by the insertion of a sulfur atom into dethiobiotin via a radical-based mechanism. In Sulfurovum sp. (strain NBC37-1), this protein is Biotin synthase.